The following is a 348-amino-acid chain: Mannonate dehydratase (348 aa).

This sequence belongs to the mannonate dehydratase family. Fe(2+) serves as cofactor. Mn(2+) is required as a cofactor.

The catalysed reaction is D-mannonate = 2-dehydro-3-deoxy-D-gluconate + H2O. The protein operates within carbohydrate metabolism; pentose and glucuronate interconversion. Its function is as follows. Catalyzes the dehydration of D-mannonate. The protein is Mannonate dehydratase of Streptococcus agalactiae serotype Ia (strain ATCC 27591 / A909 / CDC SS700).